We begin with the raw amino-acid sequence, 459 residues long: Cysteine--tRNA ligase (459 aa).

Cysteine 28 serves as a coordination point for Zn(2+). A 'HIGH' region motif is present at residues 30–40 (VTVYDLCHIGH). Positions 209, 234, and 238 each coordinate Zn(2+). A 'KMSKS' region motif is present at residues 266–270 (KMSKS). Position 269 (lysine 269) interacts with ATP.

This sequence belongs to the class-I aminoacyl-tRNA synthetase family. In terms of assembly, monomer. Requires Zn(2+) as cofactor.

Its subcellular location is the cytoplasm. It carries out the reaction tRNA(Cys) + L-cysteine + ATP = L-cysteinyl-tRNA(Cys) + AMP + diphosphate. The chain is Cysteine--tRNA ligase from Histophilus somni (strain 129Pt) (Haemophilus somnus).